A 469-amino-acid polypeptide reads, in one-letter code: UDP-glycosyltransferase 75B1 (469 aa).

His16 acts as the Proton acceptor in catalysis. His16 contacts an anthocyanidin. The UDP-alpha-D-glucose site is built by Gln334, His349, Trp352, Ser354, Glu357, Asp373, and Gln374.

It belongs to the UDP-glycosyltransferase family. Interacts with CALS1, ROP1 and phragmoplastin.

It is found in the cytoplasm. Its subcellular location is the perinuclear region. It localises to the cytoskeleton. The protein localises to the phragmoplast. The catalysed reaction is (indol-3-yl)acetate + UDP-alpha-D-glucose = 1-O-(indol-3-ylacetyl)-beta-D-glucose + UDP. The protein operates within plant hormone metabolism; auxin conjugation. Possesses low catalytic activity on indole-3-acetic acid (IAA) in vitro. May transfer UDP-glucose from sucrose synthase to callose synthase for the synthesis of callose at the forming cell plate during cytokinesis. Has high affinity for 4-aminobenzoate. Catalyzes the formation of 4-aminobenzoate glucose ester which represents a storage form of 4-aminobenzoate in the vacuole. Is the major source of this activity in the plant. Also active in vitro on benzoates and benzoate derivatives. The chain is UDP-glycosyltransferase 75B1 (UGT75B1) from Arabidopsis thaliana (Mouse-ear cress).